The primary structure comprises 232 residues: 2-C-methyl-D-erythritol 4-phosphate cytidylyltransferase (232 aa).

This sequence belongs to the IspD/TarI cytidylyltransferase family. IspD subfamily.

It carries out the reaction 2-C-methyl-D-erythritol 4-phosphate + CTP + H(+) = 4-CDP-2-C-methyl-D-erythritol + diphosphate. The protein operates within isoprenoid biosynthesis; isopentenyl diphosphate biosynthesis via DXP pathway; isopentenyl diphosphate from 1-deoxy-D-xylulose 5-phosphate: step 2/6. Catalyzes the formation of 4-diphosphocytidyl-2-C-methyl-D-erythritol from CTP and 2-C-methyl-D-erythritol 4-phosphate (MEP). This chain is 2-C-methyl-D-erythritol 4-phosphate cytidylyltransferase, found in Synechococcus elongatus (strain ATCC 33912 / PCC 7942 / FACHB-805) (Anacystis nidulans R2).